A 373-amino-acid polypeptide reads, in one-letter code: Chaperone protein DnaJ (373 aa).

One can recognise a J domain in the interval 5–70 (DYYEVLGLQK…EKKSNYDQFG (66 aa)). A CR-type zinc finger spans residues 132–214 (GVEKEITVNR…CRGNGNVRKT (83 aa)). Residues cysteine 145, cysteine 148, cysteine 162, cysteine 165, cysteine 188, cysteine 191, cysteine 202, and cysteine 205 each contribute to the Zn(2+) site. 4 CXXCXGXG motif repeats span residues 145–152 (CEHCNGSG), 162–169 (CPTCSGTG), 188–195 (CDRCSGTG), and 202–209 (CTHCRGNG).

It belongs to the DnaJ family. As to quaternary structure, homodimer. The cofactor is Zn(2+).

It localises to the cytoplasm. Participates actively in the response to hyperosmotic and heat shock by preventing the aggregation of stress-denatured proteins and by disaggregating proteins, also in an autonomous, DnaK-independent fashion. Unfolded proteins bind initially to DnaJ; upon interaction with the DnaJ-bound protein, DnaK hydrolyzes its bound ATP, resulting in the formation of a stable complex. GrpE releases ADP from DnaK; ATP binding to DnaK triggers the release of the substrate protein, thus completing the reaction cycle. Several rounds of ATP-dependent interactions between DnaJ, DnaK and GrpE are required for fully efficient folding. Also involved, together with DnaK and GrpE, in the DNA replication of plasmids through activation of initiation proteins. The chain is Chaperone protein DnaJ from Clostridium botulinum (strain Eklund 17B / Type B).